We begin with the raw amino-acid sequence, 176 residues long: MSQALQQIFNQANTTNFVVSIPHSNTTSAFTLNAQSVPIPGIRIPVTDTVTGPFGLGRAQRPGVTFEYDPLIVRFIVDEELKSWIGMYEWMLGTSNYLTGENTAQKTGPEYITLYILDNSKTEIVMSINFYKPWVSDLSEVEFSYTEDSDPALVCTATIPYTYFQVEKDGKIIAEV.

As to quaternary structure, homohexamer. Interacts with completion protein gp15.

It localises to the virion. In terms of biological role, plays an essential role in tail assembly by capping the rapidly polymerizing tail once it has reached its requisite length and serving as the interaction surface for the completion protein. This chain is Tail tube terminator protein (3), found in Escherichia coli (Bacteriophage T4).